The primary structure comprises 432 residues: Enolase (432 aa).

Glutamine 167 serves as a coordination point for (2R)-2-phosphoglycerate. The active-site Proton donor is the glutamate 209. Mg(2+) contacts are provided by aspartate 246, glutamate 287, and aspartate 314. Lysine 339, arginine 368, serine 369, and lysine 390 together coordinate (2R)-2-phosphoglycerate. Catalysis depends on lysine 339, which acts as the Proton acceptor.

Belongs to the enolase family. It depends on Mg(2+) as a cofactor.

It localises to the cytoplasm. It is found in the secreted. The protein localises to the cell surface. It catalyses the reaction (2R)-2-phosphoglycerate = phosphoenolpyruvate + H2O. It functions in the pathway carbohydrate degradation; glycolysis; pyruvate from D-glyceraldehyde 3-phosphate: step 4/5. Catalyzes the reversible conversion of 2-phosphoglycerate (2-PG) into phosphoenolpyruvate (PEP). It is essential for the degradation of carbohydrates via glycolysis. This chain is Enolase, found in Prochlorococcus marinus (strain SARG / CCMP1375 / SS120).